The following is a 144-amino-acid chain: Large ribosomal subunit protein uL16 (144 aa).

This sequence belongs to the universal ribosomal protein uL16 family. In terms of assembly, part of the 50S ribosomal subunit.

In terms of biological role, binds 23S rRNA and is also seen to make contacts with the A and possibly P site tRNAs. This Heliobacterium modesticaldum (strain ATCC 51547 / Ice1) protein is Large ribosomal subunit protein uL16.